Consider the following 451-residue polypeptide: DNA-directed RNA polymerase subunit Rpo1C (451 aa).

A unknown region spans residues 1-68; that stretch reads MQDIIGKIED…DDDELLDAVE (68 aa). The segment at 69-451 is DNA-directed RNA polymerase subunit Rpo1C; that stretch reads DDYQRILKVQ…SVSVVMKERK (383 aa).

This sequence belongs to the RNA polymerase beta' chain family. In terms of assembly, part of the RNA polymerase complex.

The protein resides in the cytoplasm. It catalyses the reaction RNA(n) + a ribonucleoside 5'-triphosphate = RNA(n+1) + diphosphate. In terms of biological role, DNA-dependent RNA polymerase (RNAP) catalyzes the transcription of DNA into RNA using the four ribonucleoside triphosphates as substrates. Forms part of the jaw domain. The polypeptide is DNA-directed RNA polymerase subunit Rpo1C (Methanothermobacter thermautotrophicus (strain ATCC 29096 / DSM 1053 / JCM 10044 / NBRC 100330 / Delta H) (Methanobacterium thermoautotrophicum)).